The primary structure comprises 166 residues: NAD(P)H-quinone oxidoreductase subunit I, chloroplastic (166 aa).

4Fe-4S ferredoxin-type domains follow at residues 55–84 and 95–124; these read GRIH…VDWK and LNYS…MTEE. [4Fe-4S] cluster-binding residues include cysteine 64, cysteine 67, cysteine 70, cysteine 74, cysteine 104, cysteine 107, cysteine 110, and cysteine 114.

Belongs to the complex I 23 kDa subunit family. In terms of assembly, NDH is composed of at least 16 different subunits, 5 of which are encoded in the nucleus. The cofactor is [4Fe-4S] cluster.

Its subcellular location is the plastid. It localises to the chloroplast thylakoid membrane. The enzyme catalyses a plastoquinone + NADH + (n+1) H(+)(in) = a plastoquinol + NAD(+) + n H(+)(out). It carries out the reaction a plastoquinone + NADPH + (n+1) H(+)(in) = a plastoquinol + NADP(+) + n H(+)(out). In terms of biological role, NDH shuttles electrons from NAD(P)H:plastoquinone, via FMN and iron-sulfur (Fe-S) centers, to quinones in the photosynthetic chain and possibly in a chloroplast respiratory chain. The immediate electron acceptor for the enzyme in this species is believed to be plastoquinone. Couples the redox reaction to proton translocation, and thus conserves the redox energy in a proton gradient. The sequence is that of NAD(P)H-quinone oxidoreductase subunit I, chloroplastic from Bahiopsis tomentosa (Tecote).